A 358-amino-acid chain; its full sequence is tRNA-specific 2-thiouridylase MnmA 2 (358 aa).

ATP is bound by residues 11–18 and M37; that span reads GMSGGVDS. C106 serves as the catalytic Nucleophile. A disulfide bond links C106 and C202. Residue G130 coordinates ATP. Residues 152 to 154 form an interaction with tRNA region; it reads KDQ. Catalysis depends on C202, which acts as the Cysteine persulfide intermediate. Positions 308–309 are interaction with tRNA; sequence RY.

The protein belongs to the MnmA/TRMU family.

Its subcellular location is the cytoplasm. The enzyme catalyses S-sulfanyl-L-cysteinyl-[protein] + uridine(34) in tRNA + AH2 + ATP = 2-thiouridine(34) in tRNA + L-cysteinyl-[protein] + A + AMP + diphosphate + H(+). Its function is as follows. Catalyzes the 2-thiolation of uridine at the wobble position (U34) of tRNA, leading to the formation of s(2)U34. This chain is tRNA-specific 2-thiouridylase MnmA 2, found in Clostridium tetani (strain Massachusetts / E88).